The primary structure comprises 450 residues: Phosphoglucosamine mutase (450 aa).

The active-site Phosphoserine intermediate is the S102. Residues S102, D244, D246, and D248 each contribute to the Mg(2+) site. The residue at position 102 (S102) is a Phosphoserine.

It belongs to the phosphohexose mutase family. The cofactor is Mg(2+). Activated by phosphorylation.

It carries out the reaction alpha-D-glucosamine 1-phosphate = D-glucosamine 6-phosphate. Catalyzes the conversion of glucosamine-6-phosphate to glucosamine-1-phosphate. This chain is Phosphoglucosamine mutase, found in Syntrophomonas wolfei subsp. wolfei (strain DSM 2245B / Goettingen).